The following is a 506-amino-acid chain: Cobyric acid synthase (506 aa).

Positions 251 to 448 constitute a GATase cobBQ-type domain; sequence DITIAIVQLP…LHGLFDSDAF (198 aa). The active-site Nucleophile is Cys-332. His-440 is a catalytic residue.

Belongs to the CobB/CobQ family. CobQ subfamily.

It functions in the pathway cofactor biosynthesis; adenosylcobalamin biosynthesis. Its function is as follows. Catalyzes amidations at positions B, D, E, and G on adenosylcobyrinic A,C-diamide. NH(2) groups are provided by glutamine, and one molecule of ATP is hydrogenolyzed for each amidation. This is Cobyric acid synthase from Salmonella dublin (strain CT_02021853).